We begin with the raw amino-acid sequence, 237 residues long: Photosystem I-associated linker protein CpcL (237 aa).

The PBS-linker domain maps to 11 to 191; sequence TTQNQRVQSF…DYRDRAGIVR (181 aa). A helical transmembrane segment spans residues 208–228; sequence GVAILGVLLAISAGMTFLFVL.

Belongs to the phycobilisome linker protein family. Part of a specialized phycobilisome (PBS), a structure that is usually composed of two distinct substructures: a core complex and a number of rods radiating from the core. This protein is part of a core-less PBS rod (called CpcL-PBS). In vegetative cells associated substoichiometrically with photosystem I and phycobiliproteins phycocyanin as well as phycoerythrocyanin in the thylakoid membrane, not found in conventional, hemidiscoidal phycobilisomes.

The protein resides in the cellular thylakoid membrane. Its function is as follows. Rod linker protein, associated with phycocyanin (PC). Linker polypeptides determine the state of aggregation and the location of the disk-shaped phycobiliprotein units within the phycobilisome (PBS) and modulate their spectroscopic properties in order to mediate a directed and optimal energy transfer. Forms a supercomplex with tetrameric photosystem I (PSI) and PC that allows efficient energy transfer from PC to PSI. This protein seems to be in the middle of the PC hexameric rod and may anchor the PC rods at the periphery of PSI tetramers. May be involved in the cyclic electron transport around PSI that provides ATP needed for N(2) fixation in heterocysts. This is Photosystem I-associated linker protein CpcL from Nostoc sp. (strain PCC 7120 / SAG 25.82 / UTEX 2576).